Reading from the N-terminus, the 579-residue chain is Nuclear receptor coactivator 5 (579 aa).

At M1 the chain carries N-acetylmethionine. Residues 1–77 (MNTAPSRPSP…DIRDHRDSRS (77 aa)) form a disordered region. Residues 1–158 (MNTAPSRPSP…RDSFDGRGPP (158 aa)) are transcription repression. T3 is modified (phosphothreonine). Phosphoserine is present on residues S9, S21, S29, S34, S96, S116, S126, S143, and S151. Positions 11-77 (TRRDPYSFGD…DIRDHRDSRS (67 aa)) are enriched in basic and acidic residues. Residues 148-172 (YRDSFDGRGPPGPESQSRAKERLKR) are disordered. T274 is modified (phosphothreonine). An LXXLL motif motif is present at residues 345–349 (LINLL). 2 positions are modified to phosphoserine: S378 and S381. 2 disordered regions span residues 378 to 428 (SADS…PTSQ) and 446 to 529 (ANSS…RPVS). 2 stretches are compositionally biased toward low complexity: residues 395 to 420 (SGSS…ATPT) and 446 to 460 (ANSS…TGSS). Residues 458 to 579 (GSSQNQNFST…APMGSYQRHY (122 aa)) form a transcription activation region. The span at 461-485 (QNQNFSTAANSQPQQRPQASGNQPP) shows a compositional bias: polar residues.

As to quaternary structure, binds HTATIP2/TIP30. Interacts with YLPM1. Forms a complex with ILF2, ILF3, YLPM1, KHDRBS1, RBMX and PPP1CA.

The protein localises to the nucleus. Functionally, nuclear receptor coregulator that can have both coactivator and corepressor functions. Interacts with nuclear receptors for steroids (ESR1 and ESR2) independently of the steroid binding domain (AF-2) of the ESR receptors, and with the orphan nuclear receptor NR1D2. Involved in the coactivation of nuclear steroid receptors (ER) as well as the corepression of MYC in response to 17-beta-estradiol (E2). The chain is Nuclear receptor coactivator 5 (Ncoa5) from Mus musculus (Mouse).